A 424-amino-acid chain; its full sequence is Serine--tRNA ligase (424 aa).

229 to 231 serves as a coordination point for L-serine; that stretch reads TAE. 260-262 serves as a coordination point for ATP; that stretch reads RRE. Glu283 serves as a coordination point for L-serine. Residue 347 to 350 participates in ATP binding; sequence EVSS. Residue Ser383 participates in L-serine binding.

This sequence belongs to the class-II aminoacyl-tRNA synthetase family. Type-1 seryl-tRNA synthetase subfamily. Homodimer. The tRNA molecule binds across the dimer.

Its subcellular location is the cytoplasm. The enzyme catalyses tRNA(Ser) + L-serine + ATP = L-seryl-tRNA(Ser) + AMP + diphosphate + H(+). It carries out the reaction tRNA(Sec) + L-serine + ATP = L-seryl-tRNA(Sec) + AMP + diphosphate + H(+). It participates in aminoacyl-tRNA biosynthesis; selenocysteinyl-tRNA(Sec) biosynthesis; L-seryl-tRNA(Sec) from L-serine and tRNA(Sec): step 1/1. Its function is as follows. Catalyzes the attachment of serine to tRNA(Ser). Is also able to aminoacylate tRNA(Sec) with serine, to form the misacylated tRNA L-seryl-tRNA(Sec), which will be further converted into selenocysteinyl-tRNA(Sec). The sequence is that of Serine--tRNA ligase from Roseiflexus sp. (strain RS-1).